The primary structure comprises 679 residues: Stress-70 protein, mitochondrial (679 aa).

The N-terminal 46 residues, 1 to 46 (MISASRAAAARLVGTTASRSPAAARHQDGWNGLSHEAFRFVSRRDY), are a transit peptide targeting the mitochondrion. The tract at residues 1-432 (MISASRAAAA…IQGGVLAGDV (432 aa)) is interaction with NFS1. 2 residues coordinate ADP: Thr63 and Asn64. The nucleotide-binding domain (NBD) stretch occupies residues 63–431 (TNSCVAVMEG…AIQGGVLAGD (369 aa)). Lys76 is subject to N6-acetyllysine. Thr87 is subject to Phosphothreonine. N6-acetyllysine; alternate occurs at positions 135 and 138. N6-succinyllysine; alternate occurs at positions 135 and 138. Lys143 carries the post-translational modification N6-acetyllysine. The residue at position 206 (Lys206) is an N6-acetyllysine; alternate. Lys206 bears the N6-succinyllysine; alternate mark. Residue Lys206 is modified to N6-malonyllysine; alternate. N6-acetyllysine is present on residues Lys234 and Lys288. Lys300 is subject to N6-acetyllysine; alternate. An N6-succinyllysine; alternate modification is found at Lys300. The ADP site is built by Glu313, Lys316, and Ser320. At Lys360 the chain carries N6-acetyllysine; alternate. Lys360 carries the post-translational modification N6-succinyllysine; alternate. Lys368 is modified (N6-succinyllysine). ADP contacts are provided by Gly388 and Arg391. Lys394 is subject to N6-succinyllysine. Ser408 carries the phosphoserine modification. The interval 432-441 (VTDVLLLDVT) is interdomain linker. Positions 432-679 (VTDVLLLDVT…QKEDQKEEKQ (248 aa)) are interaction with FXN and ISCU. The tract at residues 442–679 (PLSLGIETLG…QKEDQKEEKQ (238 aa)) is substrate-binding domain (SBD). An Omega-N-methylarginine modification is found at Arg513. N6-acetyllysine; alternate occurs at positions 567 and 600. N6-succinyllysine; alternate occurs at positions 567 and 600. Lys610 is subject to N6-succinyllysine. Lys612 is modified (N6-acetyllysine). Residue Lys646 is modified to N6-acetyllysine; alternate. Position 646 is an N6-succinyllysine; alternate (Lys646). Positions 655–679 (MASEREGSGSSSTGEQKEDQKEEKQ) are disordered. Residues 669 to 679 (EQKEDQKEEKQ) are compositionally biased toward basic and acidic residues.

This sequence belongs to the heat shock protein 70 family. Interacts strongly with the intermediate form of FXN and weakly with its mature form. Interacts with HSCB. Associates with the mitochondrial contact site and cristae organizing system (MICOS) complex, composed of at least MICOS10/MIC10, CHCHD3/MIC19, CHCHD6/MIC25, APOOL/MIC27, IMMT/MIC60, APOO/MIC23/MIC26 and QIL1/MIC13. This complex was also known under the names MINOS or MitOS complex. The MICOS complex associates with mitochondrial outer membrane proteins SAMM50, MTX1, MTX2 and DNAJC11, mitochondrial inner membrane protein TMEM11 and with HSPA9. Interacts with DNLZ, the interaction is required to prevent self-aggregation. Interacts with TESPA1. Interacts with PDPN. Interacts with NFU1, NFS1 and ISCU. Interacts with TP53; the interaction promotes TP53 degradation. Interacts (via SBD domain) with UBXN2A; the interaction with UBXN2A inhibits HSPA9 interaction with and degradation of TP53, thereby promotes TP53 translocation to the nucleus. Interacts with ITPR1 AND VDAC1; this interaction couples ITPR1 to VDAC1. Component of the TIM23 mitochondrial inner membrane pre-sequence translocase complex.

Its subcellular location is the mitochondrion. It localises to the nucleus. The protein resides in the nucleolus. It is found in the cytoplasm. The protein localises to the mitochondrion matrix. The catalysed reaction is ATP + H2O = ADP + phosphate + H(+). Its activity is regulated as follows. The chaperone activity is regulated by ATP-induced allosteric coupling of the nucleotide-binding (NBD) and substrate-binding (SBD) domains. ATP binding in the nucleotide-binding pocket (NBP) leads to a conformational change in the NBD, which is transferred through the interdomain linker (IDL) to the substrate-binding domain (SBD). This elicits a reduced substrate affinity and a faster substrate exchange rate. Upon hydrolysis of ATP to ADP, the protein undergoes a conformational change that increases its affinity for substrate proteins. It cycles through repeated phases of ATP hydrolysis and nucleotide exchange, facilitating repeated cycles of substrate binding and release. Functions in collaboration with co-chaperones. Functions with the co-chaperone, DNLZ, to maintain solubility and regulate ATP hydrolysis. Nucleotide exchange factors, GRPEL1 and GRPEL2, accelerate nucleotide exchange. Mitochondrial chaperone that plays a key role in mitochondrial protein import, folding, and assembly. Plays an essential role in the protein quality control system, the correct folding of proteins, the re-folding of misfolded proteins, and the targeting of proteins for subsequent degradation. These processes are achieved through cycles of ATP binding, ATP hydrolysis, and ADP release, mediated by co-chaperones. In mitochondria, it associates with the TIM (translocase of the inner membrane) protein complex to assist in the import and folding of mitochondrial proteins. Plays an important role in mitochondrial iron-sulfur cluster (ISC) biogenesis, interacts with and stabilizes ISC cluster assembly proteins FXN, NFU1, NFS1 and ISCU. Regulates erythropoiesis via stabilization of ISC assembly. Regulates mitochondrial calcium-dependent apoptosis by coupling two calcium channels, ITPR1 and VDAC1, at the mitochondria-associated endoplasmic reticulum (ER) membrane to facilitate calcium transport from the ER lumen to the mitochondria intermembrane space, providing calcium for the downstream calcium channel MCU, which releases it into the mitochondrial matrix. Although primarily located in the mitochondria, it is also found in other cellular compartments. In the cytosol, it associates with proteins involved in signaling, apoptosis, or senescence. It may play a role in cell cycle regulation via its interaction with and promotion of degradation of TP53. May play a role in the control of cell proliferation and cellular aging. Protects against reactive oxygen species (ROS). Extracellular HSPA9 plays a cytoprotective role by preventing cell lysis following immune attack by the membrane attack complex by disrupting formation of the complex. The sequence is that of Stress-70 protein, mitochondrial from Rattus norvegicus (Rat).